The following is a 555-amino-acid chain: Embryonic protein DC-8 (555 aa).

Residues 83-115 (RENTDYAYDKGREGGDVAAQKAEEAKEKAKMAK) are compositionally biased toward basic and acidic residues. Disordered regions lie at residues 83-118 (RENT…KDTT) and 132-151 (KAEE…KEKA). 17 repeat units span residues 97-114 (GDVA…AKMA), 115-125 (KDTTMGKAGEY), 126-140 (KDYT…KEKA), 141-154 (AQKA…AGEY), 155-176 (KNYT…AGEY), 177-191 (KDYA…KDTT), 192-205 (AQKA…TGEY), 206-216 (KDYAAQKAAEA), 217-237 (KVLA…DGEY), 238-259 (KDYA…TGEY), 260-281 (KDYA…AKEY), 282-303 (KEYA…TGEY), 304-325 (KDYS…TKEY), 326-343 (KDYT…TMEK), 344-358 (AKEA…TGEY), 359-376 (KDYA…TVEK), and 377-391 (AKEG…MTEL). Residues 97–391 (GDVAAQKAEE…DTTVGKMTEL (295 aa)) form a 17 X approximate tandem repeats region. The disordered stretch occupies residues 184-204 (AAEAKDTTAQKAAEAKEKTGE). Positions 444–465 (LQEEGVKDEAKQRAEADRETAG) are enriched in basic and acidic residues. The segment at 444 to 472 (LQEEGVKDEAKQRAEADRETAGDRGSAAK) is disordered.

Belongs to the LEA type 4 family.

It is found in the cytoplasm. It localises to the secreted. The protein localises to the cell wall. Its function is as follows. May play a role in late embryogeny. This Daucus carota (Wild carrot) protein is Embryonic protein DC-8.